The following is a 710-amino-acid chain: ARM REPEAT PROTEIN INTERACTING WITH ABF2 (710 aa).

Residues 1–35 are disordered; that stretch reads MDQQPERREGRSFPERKGQKRKLEEGAAAVEDREI. ARM repeat units lie at residues 85-127, 138-185, 188-227, 230-269, 272-311, 314-353, 355-394, 429-468, and 470-509; these read EDLV…EKGS, PEYQ…NLAH, SSIK…TLAF, DDNK…NLVH, PHIK…QFAS, SDCK…RLAQ, AHNQ…GLAD, LKRL…HLCS, and EDQR…KLAN. One can recognise a BTB domain in the interval 541–608; it reads SDVTFLVEGR…IYTGSVDITN (68 aa).

In terms of assembly, interacts with ABF2. Interacts with DUF7/AIP1. As to expression, detected in embryos and most of the vegetative and reproductive organs.

Its subcellular location is the nucleus. It functions in the pathway protein modification; protein ubiquitination. Functionally, may act as a substrate-specific adapter of an E3 ubiquitin-protein ligase complex (CUL3-RBX1-BTB) which mediates the ubiquitination and subsequent proteasomal degradation of target proteins. Acts as a positive regulator of ABA response via the modulation of the transcriptional activity of ABF2, a transcription factor which controls ABA-dependent gene expression via the G-box-type ABA-responsive elements. Negative regulator of seed germination and young seedling growth. The protein is ARM REPEAT PROTEIN INTERACTING WITH ABF2 (ARIA) of Arabidopsis thaliana (Mouse-ear cress).